We begin with the raw amino-acid sequence, 466 residues long: UDP-N-acetylmuramoylalanine--D-glutamate ligase (466 aa).

ATP is bound at residue 121–127 (GTNGKST).

The protein belongs to the MurCDEF family.

The protein resides in the cytoplasm. The enzyme catalyses UDP-N-acetyl-alpha-D-muramoyl-L-alanine + D-glutamate + ATP = UDP-N-acetyl-alpha-D-muramoyl-L-alanyl-D-glutamate + ADP + phosphate + H(+). It participates in cell wall biogenesis; peptidoglycan biosynthesis. In terms of biological role, cell wall formation. Catalyzes the addition of glutamate to the nucleotide precursor UDP-N-acetylmuramoyl-L-alanine (UMA). In Rhodopseudomonas palustris (strain HaA2), this protein is UDP-N-acetylmuramoylalanine--D-glutamate ligase.